A 215-amino-acid polypeptide reads, in one-letter code: uncharacterized protein (215 aa).

Positions 1 to 29 are cleaved as a signal peptide; the sequence is MDKVQSGFLILFLFLMECQLHLCLPYADG. The Extracellular portion of the chain corresponds to 30–100; it reads LHPTGNITGL…IIRHRPALVK (71 aa). A helical membrane pass occupies residues 101-121; it reads VILISSVAFSIALICGMAISY. Over 122-215 the chain is Cytoplasmic; the sequence is MIYRLAQAEE…ASHNGKMEDL (94 aa). A disordered region spans residues 191–215; that stretch reads LKEEQNSVTENKTKNASHNGKMEDL. Over residues 196 to 208 the composition is skewed to polar residues; it reads NSVTENKTKNASH.

It is found in the membrane. This is an uncharacterized protein from Homo sapiens (Human).